Consider the following 369-residue polypeptide: Velvet complex subunit B (369 aa).

Disordered stretches follow at residues Met1 to His54, Ser138 to Pro174, and Lys346 to Tyr369. Positions His13–Thr27 are enriched in pro residues. The Velvet domain occupies Val53–Arg345.

Belongs to the velvet family. VelB subfamily. Component of the heterotrimeric velvet complex composed of laeA, veA and velB; VeA acting as a bridging protein between laeA and velB. Interacts directly with veA. Forms a heterodimeric complex with vosA; the formation of the velB-vosA complex is light-dependent.

It is found in the nucleus. The protein resides in the cytoplasm. Its function is as follows. Component of the velvet transcription factor complex that controls sexual/asexual developmental ratio in response to light, promoting sexual development in the darkness while stimulating asexual sporulation under illumination. The velvet complex acts as a global regulator for secondary metabolite gene expression. Component of the velB-VosA heterodimeric complex that plays a dual role in activating genes associated with spore maturation and repressing certain development-associated genes. The velB-VosA complex binds DNA through the DNA-binding domain of vosA that recognizes an 11-nucleotide consensus sequence 5'-CTGGCCGCGGC-3' consisting of two motifs in the promoters of key developmental regulatory genes. The vosA-velB complex binds to the beta-glucan synthase fksA gene promoter in asexual spores for repression. This is Velvet complex subunit B from Emericella nidulans (strain FGSC A4 / ATCC 38163 / CBS 112.46 / NRRL 194 / M139) (Aspergillus nidulans).